We begin with the raw amino-acid sequence, 498 residues long: MNSMKYRDLREFLSLLEERGELKRITQPIDPYLEMTEIADRTLRAEGPALLFENPKGYDMPVLCNLFGTPKRVALGMGQEEVSALRDVGKLLAFLKEPEPPKGFRDLVDKMPKFRQVLNMPTKRLFSAPCQEQIWQGDDVDLRRIPVMQCWPEDAAPLITWGLTVTRGPHKERQNLGIYRQQVLGKNKLIMRWLSHRGGALDFQEWCQENPGQRFPVAVALGADPATILGAVTPVPDTLSEYAFAGLLRGHKTEVVKCLSSDLEVPASAEIVLEGYIEPGEMAAEGPYGDHTGYYNEVDHFPVFTVTHITQRQNAIYHSTYTGRPPDEPAVLGVALNEVFVPILQKQFPEIVDFYLPPEGCSYRLAVVTMKKQYAGHAKRVMMGVWSFLRQFMYTKFVIVCDDDINARDWKDVIWAITTRMDPARDTVLVENTPIDYLDFASPVSGLGSKMGLDATNKWPGETQREWGHPIKKDPQVCARIDEIWDELAIFSDREPRR.

Asparagine 175 serves as a coordination point for Mn(2+). Prenylated FMN is bound by residues isoleucine 178–arginine 180, arginine 192–leucine 194, and arginine 197–glycine 198. Position 241 (glutamate 241) interacts with Mn(2+). Aspartate 290 serves as the catalytic Proton donor.

This sequence belongs to the UbiD family. In terms of assembly, homohexamer. Prenylated FMN serves as cofactor. The cofactor is Mn(2+).

It is found in the cell membrane. It catalyses the reaction a 4-hydroxy-3-(all-trans-polyprenyl)benzoate + H(+) = a 2-(all-trans-polyprenyl)phenol + CO2. It functions in the pathway cofactor biosynthesis; ubiquinone biosynthesis. Its function is as follows. Catalyzes the decarboxylation of 3-octaprenyl-4-hydroxy benzoate to 2-octaprenylphenol, an intermediate step in ubiquinone biosynthesis. In Pectobacterium atrosepticum (strain SCRI 1043 / ATCC BAA-672) (Erwinia carotovora subsp. atroseptica), this protein is 3-octaprenyl-4-hydroxybenzoate carboxy-lyase.